The sequence spans 186 residues: Ribosome-recycling factor (186 aa).

It belongs to the RRF family.

It is found in the cytoplasm. Functionally, responsible for the release of ribosomes from messenger RNA at the termination of protein biosynthesis. May increase the efficiency of translation by recycling ribosomes from one round of translation to another. The polypeptide is Ribosome-recycling factor (Allorhizobium ampelinum (strain ATCC BAA-846 / DSM 112012 / S4) (Agrobacterium vitis (strain S4))).